The primary structure comprises 318 residues: Ubiquitin-like domain-containing CTD phosphatase 1 (318 aa).

A Ubiquitin-like domain is found at 3 to 81 (LPIIVKWGGQ…IMMMGTREES (79 aa)). The residue at position 117 (K117) is an N6-acetyllysine. Positions 133–294 (PREGKKLLVL…VKLTQYLKEI (162 aa)) constitute an FCP1 homology domain. D143, D145, and D253 together coordinate Mg(2+).

Requires Mg(2+) as cofactor.

It is found in the nucleus. The catalysed reaction is O-phospho-L-seryl-[protein] + H2O = L-seryl-[protein] + phosphate. The enzyme catalyses O-phospho-L-threonyl-[protein] + H2O = L-threonyl-[protein] + phosphate. Its function is as follows. Dephosphorylates 26S nuclear proteasomes, thereby decreasing their proteolytic activity. Recruited to the 19S regulatory particle of the 26S proteasome through its interaction with 19S component PSMD2/RPN1. Once recruited, dephosphorylates 19S component PSMC2/RPT1 which impairs PSMC2 ATPase activity and disrupts 26S proteasome assembly. Has also been reported to stimulate the proteolytic activity of the 26S proteasome. The polypeptide is Ubiquitin-like domain-containing CTD phosphatase 1 (Ublcp1) (Rattus norvegicus (Rat)).